The sequence spans 302 residues: D-alanine--D-alanine ligase (302 aa).

The ATP-grasp domain occupies 104 to 296; sequence KLVFERFAIP…FPDLVTWLVE (193 aa). An ATP-binding site is contributed by 130–183; the sequence is AMARPYVVKPLDQGSSVGVTIVTSETNDLPFSRDDWPYGRQVMVERFIPGRELT. The Mg(2+) site is built by Asp-251, Glu-263, and Asn-265.

This sequence belongs to the D-alanine--D-alanine ligase family. The cofactor is Mg(2+). It depends on Mn(2+) as a cofactor.

The protein localises to the cytoplasm. It carries out the reaction 2 D-alanine + ATP = D-alanyl-D-alanine + ADP + phosphate + H(+). It functions in the pathway cell wall biogenesis; peptidoglycan biosynthesis. Functionally, cell wall formation. This is D-alanine--D-alanine ligase from Rhodospirillum rubrum (strain ATCC 11170 / ATH 1.1.1 / DSM 467 / LMG 4362 / NCIMB 8255 / S1).